The sequence spans 952 residues: Leucine--tRNA ligase (952 aa).

The 'HIGH' region signature appears at 48–58 (PYLNGVLHAGH). Positions 644–648 (KLSKS) match the 'KMSKS' region motif. Residue K647 participates in ATP binding.

The protein belongs to the class-I aminoacyl-tRNA synthetase family.

The protein localises to the cytoplasm. It catalyses the reaction tRNA(Leu) + L-leucine + ATP = L-leucyl-tRNA(Leu) + AMP + diphosphate. This Methanococcus vannielii (strain ATCC 35089 / DSM 1224 / JCM 13029 / OCM 148 / SB) protein is Leucine--tRNA ligase.